Consider the following 367-residue polypeptide: Dual-specificity RNA methyltransferase RlmN (367 aa).

Glutamate 93 acts as the Proton acceptor in catalysis. The region spanning 99–333 is the Radical SAM core domain; sequence EEDRATLCVS…VIVRKTRGDD (235 aa). A disulfide bridge connects residues cysteine 106 and cysteine 338. Positions 113, 117, and 120 each coordinate [4Fe-4S] cluster. Residues 162–163, serine 194, 216–218, and asparagine 295 contribute to the S-adenosyl-L-methionine site; these read GE and SLH. Cysteine 338 (S-methylcysteine intermediate) is an active-site residue.

The protein belongs to the radical SAM superfamily. RlmN family. [4Fe-4S] cluster is required as a cofactor.

The protein resides in the cytoplasm. It carries out the reaction adenosine(2503) in 23S rRNA + 2 reduced [2Fe-2S]-[ferredoxin] + 2 S-adenosyl-L-methionine = 2-methyladenosine(2503) in 23S rRNA + 5'-deoxyadenosine + L-methionine + 2 oxidized [2Fe-2S]-[ferredoxin] + S-adenosyl-L-homocysteine. The catalysed reaction is adenosine(37) in tRNA + 2 reduced [2Fe-2S]-[ferredoxin] + 2 S-adenosyl-L-methionine = 2-methyladenosine(37) in tRNA + 5'-deoxyadenosine + L-methionine + 2 oxidized [2Fe-2S]-[ferredoxin] + S-adenosyl-L-homocysteine. In terms of biological role, specifically methylates position 2 of adenine 2503 in 23S rRNA and position 2 of adenine 37 in tRNAs. m2A2503 modification seems to play a crucial role in the proofreading step occurring at the peptidyl transferase center and thus would serve to optimize ribosomal fidelity. This Aeromonas hydrophila subsp. hydrophila (strain ATCC 7966 / DSM 30187 / BCRC 13018 / CCUG 14551 / JCM 1027 / KCTC 2358 / NCIMB 9240 / NCTC 8049) protein is Dual-specificity RNA methyltransferase RlmN.